The primary structure comprises 92 residues: Phenol 2-monooxygenase, auxiliary component DmpK (92 aa).

As to quaternary structure, homotrimer or homotetramer. Interacts with the phenol hydroxylase components DmpL (P1 component) and DmpN (P3 component).

It functions in the pathway aromatic compound metabolism; phenol degradation. Functionally, dmpK is an auxiliary protein associated with the multicomponent phenol hydroxylase DmpLMNOP and it may be involved in the post-translational incorporation of iron into the oxygenase component of the phenol hydroxylase. Required for growth on phenol but not for in vitro phenol hydroxylase activity. The chain is Phenol 2-monooxygenase, auxiliary component DmpK from Pseudomonas sp. (strain CF600).